Consider the following 545-residue polypeptide: CTP synthase (545 aa).

The interval 1–266 (MTTNYIFVTG…DDYICKRFSL (266 aa)) is amidoligase domain. Residue Ser14 coordinates CTP. Ser14 contributes to the UTP binding site. ATP is bound by residues 15 to 20 (SLGKGI) and Asp72. Positions 72 and 140 each coordinate Mg(2+). CTP is bound by residues 147–149 (DIE), 187–192 (KTKPTQ), and Lys223. Residues 187-192 (KTKPTQ) and Lys223 each bind UTP. Residue 239 to 241 (KDI) participates in ATP binding. The 252-residue stretch at 291-542 (TIGMVGKYVA…VKAAGAYQKR (252 aa)) folds into the Glutamine amidotransferase type-1 domain. Gly352 contacts L-glutamine. Cys379 acts as the Nucleophile; for glutamine hydrolysis in catalysis. Residues 380–383 (LGMQ), Glu403, and Arg470 each bind L-glutamine. Residues His515 and Glu517 contribute to the active site.

The protein belongs to the CTP synthase family. In terms of assembly, homotetramer.

The enzyme catalyses UTP + L-glutamine + ATP + H2O = CTP + L-glutamate + ADP + phosphate + 2 H(+). It carries out the reaction L-glutamine + H2O = L-glutamate + NH4(+). It catalyses the reaction UTP + NH4(+) + ATP = CTP + ADP + phosphate + 2 H(+). The protein operates within pyrimidine metabolism; CTP biosynthesis via de novo pathway; CTP from UDP: step 2/2. Allosterically activated by GTP, when glutamine is the substrate; GTP has no effect on the reaction when ammonia is the substrate. The allosteric effector GTP functions by stabilizing the protein conformation that binds the tetrahedral intermediate(s) formed during glutamine hydrolysis. Inhibited by the product CTP, via allosteric rather than competitive inhibition. Its function is as follows. Catalyzes the ATP-dependent amination of UTP to CTP with either L-glutamine or ammonia as the source of nitrogen. Regulates intracellular CTP levels through interactions with the four ribonucleotide triphosphates. The sequence is that of CTP synthase from Pectobacterium atrosepticum (strain SCRI 1043 / ATCC BAA-672) (Erwinia carotovora subsp. atroseptica).